The following is a 463-amino-acid chain: Cysteine--tRNA ligase (463 aa).

Position 29 (C29) interacts with Zn(2+). The 'HIGH' region motif lies at 31–41 (PTVYDFAHIGN). Positions 227, 252, and 256 each coordinate Zn(2+). The 'KMSKS' region motif lies at 285–289 (KMSKS). Residue K288 participates in ATP binding.

This sequence belongs to the class-I aminoacyl-tRNA synthetase family. Monomer. Zn(2+) serves as cofactor.

It localises to the cytoplasm. It carries out the reaction tRNA(Cys) + L-cysteine + ATP = L-cysteinyl-tRNA(Cys) + AMP + diphosphate. The polypeptide is Cysteine--tRNA ligase (Rhodopseudomonas palustris (strain ATCC BAA-98 / CGA009)).